The sequence spans 455 residues: Virion host shutoff protein (455 aa).

This sequence belongs to the herpesviridae VHS protein family.

The protein resides in the virion. In terms of biological role, minor structural protein that acts as an endoribonuclease during lytic infection. Degrades host mRNAs in the cytoplasm by cutting them at preferred sites, including some in regions of translation initiation. The polypeptide is Virion host shutoff protein (17) (Homo sapiens (Human)).